The following is a 601-amino-acid chain: MSGRFVRASKYRHIFGQTCKKELCYDNIKLSNNAWDSNLLSVNPFYLSVNWNAGAGGALAVIPLNERGKLPDQVNLFRGHTAAVLDTDWNPFHDQVLASGGDDSKIMIWKVPEDYTVMEPYEDVHPIAELKGHSRKVGLVQYHPTAANVLASSSADNTIKLWDCEKGVAHVSLKMDVMCQSMSFNADGTRLVTTSRDKKVRVWDPRTDKPVSVGNGHAGAKNPRVVWLGSLDRFATTGFSKMSDRQIALWDPTNLSEPIGGFTTLDTGSGILMPFWDDGTKVIYLAGKGDGNIRYYEYENDVFHYLSEFKSVDPQRGIAFLPKRGVNVSENEVMRAYKSVNDSIIEPISFIVPRRSESFQSDIYPPAPSGKPSLTAEEWASGKDAQPDLLDMSTLYESKGTVEKAVSATVPSAGAQVQKHNEEKVETPKPEAQPVSKPKESAEEQKPSKEPEVKPTTPSASKVEEPSKKRDEDNHQKEETVTQPKREKTPVEKSFPKPASSPVTFSEDVKKEPSEEKKLEVSDEAPKAAPLAESKKVEEKEPFYVSKDKKDISAVNLADLNKRFEGFEKRYEEELAIRDWKIAQLEDKLAKLTEAIKEKCN.

WD repeat units follow at residues 79-119 (GHTA…TVME), 132-172 (GHSR…AHVS), 174-213 (KMDV…PVSV), 220-260 (AKNP…EPIG), and 266-306 (DTGS…FHYL). 2 disordered regions span residues 361-386 (SDIY…KDAQ) and 407-540 (SATV…VEEK). Basic and acidic residues-rich tracts occupy residues 419–429 (KHNEEKVETPK), 437–453 (KPKE…EPEV), and 462–495 (KVEE…EKSF). A phosphoserine mark is found at Ser500 and Ser501. The span at 507–526 (EDVKKEPSEEKKLEVSDEAP) shows a compositional bias: basic and acidic residues. Ser553 carries the post-translational modification Phosphoserine. Residues 556–600 (NLADLNKRFEGFEKRYEEELAIRDWKIAQLEDKLAKLTEAIKEKC) adopt a coiled-coil conformation.

This sequence belongs to the WD repeat coronin family. In terms of assembly, binds to F-actin.

This is Coronin-like protein crn1 (crn1) from Schizosaccharomyces pombe (strain 972 / ATCC 24843) (Fission yeast).